The chain runs to 304 residues: Ornithine carbamoyltransferase (304 aa).

Residues 47–50 (STRT), arginine 98, and 125–128 (HPCQ) contribute to the carbamoyl phosphate site. L-ornithine-binding positions include asparagine 156, aspartate 221, and 225–226 (SM). Residues 262–263 (CL) and arginine 290 each bind carbamoyl phosphate.

Belongs to the aspartate/ornithine carbamoyltransferase superfamily. OTCase family.

Its subcellular location is the cytoplasm. It carries out the reaction carbamoyl phosphate + L-ornithine = L-citrulline + phosphate + H(+). The protein operates within amino-acid biosynthesis; L-arginine biosynthesis; L-arginine from L-ornithine and carbamoyl phosphate: step 1/3. Functionally, reversibly catalyzes the transfer of the carbamoyl group from carbamoyl phosphate (CP) to the N(epsilon) atom of ornithine (ORN) to produce L-citrulline. This is Ornithine carbamoyltransferase from Methanococcus maripaludis (strain C5 / ATCC BAA-1333).